The following is a 196-amino-acid chain: Phosphoheptose isomerase (196 aa).

Residues 36-196 form the SIS domain; that stretch reads MTNCLINGGK…GIDALLLGVE (161 aa). Residue 51-53 participates in substrate binding; that stretch reads NGG. Residues histidine 60 and glutamate 64 each coordinate Zn(2+). Residues glutamate 64, 93 to 94, 119 to 121, serine 124, and glutamine 174 each bind substrate; these read ND and STS. 2 residues coordinate Zn(2+): glutamine 174 and histidine 182.

It belongs to the SIS family. GmhA subfamily. In terms of assembly, homotetramer. Zn(2+) serves as cofactor.

Its subcellular location is the cytoplasm. It catalyses the reaction 2 D-sedoheptulose 7-phosphate = D-glycero-alpha-D-manno-heptose 7-phosphate + D-glycero-beta-D-manno-heptose 7-phosphate. Its pathway is carbohydrate biosynthesis; D-glycero-D-manno-heptose 7-phosphate biosynthesis; D-glycero-alpha-D-manno-heptose 7-phosphate and D-glycero-beta-D-manno-heptose 7-phosphate from sedoheptulose 7-phosphate: step 1/1. Functionally, catalyzes the isomerization of sedoheptulose 7-phosphate in D-glycero-D-manno-heptose 7-phosphate. The chain is Phosphoheptose isomerase from Dechloromonas aromatica (strain RCB).